Reading from the N-terminus, the 423-residue chain is Adenylosuccinate synthetase (423 aa).

Residues 12–18 (GDEGKGK) and 40–42 (GHT) each bind GTP. Aspartate 13 serves as the catalytic Proton acceptor. Mg(2+) is bound by residues aspartate 13 and glycine 40. Residues 13–16 (DEGK), 38–41 (NAGH), threonine 129, arginine 143, glutamine 221, threonine 236, and arginine 300 each bind IMP. Residue histidine 41 is the Proton donor of the active site. 296–302 (AVTGRER) lines the substrate pocket. Residues arginine 302, 328-330 (KSD), and 408-410 (SVG) contribute to the GTP site.

It belongs to the adenylosuccinate synthetase family. As to quaternary structure, homodimer. It depends on Mg(2+) as a cofactor.

The protein resides in the cytoplasm. It carries out the reaction IMP + L-aspartate + GTP = N(6)-(1,2-dicarboxyethyl)-AMP + GDP + phosphate + 2 H(+). It participates in purine metabolism; AMP biosynthesis via de novo pathway; AMP from IMP: step 1/2. In terms of biological role, plays an important role in the de novo pathway of purine nucleotide biosynthesis. Catalyzes the first committed step in the biosynthesis of AMP from IMP. This chain is Adenylosuccinate synthetase, found in Phocaeicola vulgatus (strain ATCC 8482 / DSM 1447 / JCM 5826 / CCUG 4940 / NBRC 14291 / NCTC 11154) (Bacteroides vulgatus).